Reading from the N-terminus, the 461-residue chain is Bifunctional protein GlmU (461 aa).

The tract at residues 1–229 (MEKYVVVLAA…FSESLGVNDR (229 aa)) is pyrophosphorylase. UDP-N-acetyl-alpha-D-glucosamine-binding positions include 8 to 11 (LAAG), Lys22, Gln72, and 77 to 78 (GT). Asp102 is a binding site for Mg(2+). UDP-N-acetyl-alpha-D-glucosamine is bound by residues Gly139, Glu154, Asn169, and Asn227. Asn227 serves as a coordination point for Mg(2+). The tract at residues 230-250 (IALAEATRIMQRRINEGHMRD) is linker. The tract at residues 251-461 (GVTFIDPATA…LPLSEDEEWK (211 aa)) is N-acetyltransferase. UDP-N-acetyl-alpha-D-glucosamine is bound by residues Arg332 and Lys350. Residue His362 is the Proton acceptor of the active site. The UDP-N-acetyl-alpha-D-glucosamine site is built by Tyr365 and Asn376. Positions 422 and 439 each coordinate acetyl-CoA.

In the N-terminal section; belongs to the N-acetylglucosamine-1-phosphate uridyltransferase family. This sequence in the C-terminal section; belongs to the transferase hexapeptide repeat family. In terms of assembly, homotrimer. Mg(2+) serves as cofactor.

It localises to the cytoplasm. The enzyme catalyses alpha-D-glucosamine 1-phosphate + acetyl-CoA = N-acetyl-alpha-D-glucosamine 1-phosphate + CoA + H(+). It carries out the reaction N-acetyl-alpha-D-glucosamine 1-phosphate + UTP + H(+) = UDP-N-acetyl-alpha-D-glucosamine + diphosphate. It functions in the pathway nucleotide-sugar biosynthesis; UDP-N-acetyl-alpha-D-glucosamine biosynthesis; N-acetyl-alpha-D-glucosamine 1-phosphate from alpha-D-glucosamine 6-phosphate (route II): step 2/2. The protein operates within nucleotide-sugar biosynthesis; UDP-N-acetyl-alpha-D-glucosamine biosynthesis; UDP-N-acetyl-alpha-D-glucosamine from N-acetyl-alpha-D-glucosamine 1-phosphate: step 1/1. Its pathway is bacterial outer membrane biogenesis; LPS lipid A biosynthesis. Its function is as follows. Catalyzes the last two sequential reactions in the de novo biosynthetic pathway for UDP-N-acetylglucosamine (UDP-GlcNAc). The C-terminal domain catalyzes the transfer of acetyl group from acetyl coenzyme A to glucosamine-1-phosphate (GlcN-1-P) to produce N-acetylglucosamine-1-phosphate (GlcNAc-1-P), which is converted into UDP-GlcNAc by the transfer of uridine 5-monophosphate (from uridine 5-triphosphate), a reaction catalyzed by the N-terminal domain. This Lactobacillus delbrueckii subsp. bulgaricus (strain ATCC BAA-365 / Lb-18) protein is Bifunctional protein GlmU.